Reading from the N-terminus, the 274-residue chain is MGTDSRAAGALLARASTLHLQTGNLLNWGRLRKKCPSTHSEELRDCIQKTLNEWSSQISPDLVREFPDVLECTMSHAVEKINPDEREEMKVSAKLFIVGSNSSSSTRSAVDMACSVLGVAQLDSVIMASPPIEDGVNLSLEHLQPYWEELENLVQSKKIVAIGTSDLDKTQLEQLYQWAQVKPNSNQVNLASCCVMPPDLTAFAKQFDIQLLTHNDPKELLSEASFQEALQESIPDIEAQDWVPLWLLRYSVIVKSRGIIKSKGYILQAKRRGS.

Residue serine 59 is modified to Phosphoserine. N6-acetyllysine is present on lysine 263.

It belongs to the aldo/keto reductase family. Glutamate--cysteine ligase light chain subfamily. Heterodimer of a catalytic heavy chain and a regulatory light chain.

Its pathway is sulfur metabolism; glutathione biosynthesis; glutathione from L-cysteine and L-glutamate: step 1/2. This Mus musculus (Mouse) protein is Glutamate--cysteine ligase regulatory subunit (Gclm).